The chain runs to 325 residues: MIARIWSGESPLWRLLLPFSWLYGLVSGAIRLSYKLGLKRAWRAPVPVVVVGNLTAGGNGKTPVVIWLVEQLQRRGVRVGVVSRGYGGKAVAYPLLLTPETTTAEAGDEPVLIYQRTGAPVAVAPERAAAVKAILAAHDVQIIITDDGLQHYRLARDIEIVVIDGVRRFGNGWWLPAGPMRERASRLKTVDAAIVNGGVARAGEIPMQLAPGLAVNLRTGARCDVAQLSNIVAMAGIGHPPRFFATLESCGAHPQKCVPLADHQTLAPADVQALVGEGQTLVMTEKDAVKCRAFAEDNWWFLPVDARLSGEKPDKLLEHITSLVR.

Residue 55-62 coordinates ATP; sequence TAGGNGKT.

Belongs to the LpxK family.

It catalyses the reaction a lipid A disaccharide + ATP = a lipid IVA + ADP + H(+). It participates in glycolipid biosynthesis; lipid IV(A) biosynthesis; lipid IV(A) from (3R)-3-hydroxytetradecanoyl-[acyl-carrier-protein] and UDP-N-acetyl-alpha-D-glucosamine: step 6/6. Functionally, transfers the gamma-phosphate of ATP to the 4'-position of a tetraacyldisaccharide 1-phosphate intermediate (termed DS-1-P) to form tetraacyldisaccharide 1,4'-bis-phosphate (lipid IVA). The protein is Tetraacyldisaccharide 4'-kinase of Salmonella arizonae (strain ATCC BAA-731 / CDC346-86 / RSK2980).